The chain runs to 91 residues: Small ribosomal subunit protein uS19 (91 aa).

Belongs to the universal ribosomal protein uS19 family.

Protein S19 forms a complex with S13 that binds strongly to the 16S ribosomal RNA. This is Small ribosomal subunit protein uS19 from Bordetella petrii (strain ATCC BAA-461 / DSM 12804 / CCUG 43448).